We begin with the raw amino-acid sequence, 421 residues long: Serine hydroxymethyltransferase (421 aa).

Residues L118 and 122 to 124 contribute to the (6S)-5,6,7,8-tetrahydrofolate site; that span reads GHL. At K226 the chain carries N6-(pyridoxal phosphate)lysine. (6S)-5,6,7,8-tetrahydrofolate is bound at residue E242.

This sequence belongs to the SHMT family. Homodimer. The cofactor is pyridoxal 5'-phosphate.

It localises to the cytoplasm. The catalysed reaction is (6R)-5,10-methylene-5,6,7,8-tetrahydrofolate + glycine + H2O = (6S)-5,6,7,8-tetrahydrofolate + L-serine. Its pathway is one-carbon metabolism; tetrahydrofolate interconversion. It participates in amino-acid biosynthesis; glycine biosynthesis; glycine from L-serine: step 1/1. Its function is as follows. Catalyzes the reversible interconversion of serine and glycine with tetrahydrofolate (THF) serving as the one-carbon carrier. This reaction serves as the major source of one-carbon groups required for the biosynthesis of purines, thymidylate, methionine, and other important biomolecules. Also exhibits THF-independent aldolase activity toward beta-hydroxyamino acids, producing glycine and aldehydes, via a retro-aldol mechanism. This chain is Serine hydroxymethyltransferase, found in Mycoplasmopsis synoviae (strain 53) (Mycoplasma synoviae).